A 329-amino-acid chain; its full sequence is Aspartate--ammonia ligase (329 aa).

Belongs to the class-II aminoacyl-tRNA synthetase family. AsnA subfamily.

It is found in the cytoplasm. The catalysed reaction is L-aspartate + NH4(+) + ATP = L-asparagine + AMP + diphosphate + H(+). It functions in the pathway amino-acid biosynthesis; L-asparagine biosynthesis; L-asparagine from L-aspartate (ammonia route): step 1/1. The sequence is that of Aspartate--ammonia ligase from Ureaplasma parvum serovar 3 (strain ATCC 27815 / 27 / NCTC 11736).